Here is a 1457-residue protein sequence, read N- to C-terminus: NBPF family member NBPF12 (1457 aa).

Positions 75–119 (RQFKEEKLAEQLKQAEELRQYKVLVHSQERELTQLREKLREGRDA) form a coiled coil. A disordered region spans residues 162–200 (LSPENDEDEDEDVQVEEDEKVLESSAPREVQKAEESKVP). A compositionally biased stretch (acidic residues) spans 165–181 (ENDEDEDEDVQVEEDEK). One can recognise an Olduvai 1 domain in the interval 165 to 259 (ENDEDEDEDV…ECQDALNILP (95 aa)). Residues 190-200 (EVQKAEESKVP) are compositionally biased toward basic and acidic residues. Positions 339–390 (KSMLRNELQFKEEKLAEQLKQAEELRQYKVLVHSQERELTQLREKLREGRDA) form a coiled coil. The interval 432–472 (KLSPENDEDEDEDVQVEEDEKVLESSSPREMQKAEESKVPE) is disordered. Residues 436–452 (ENDEDEDEDVQVEEDEK) show a composition bias toward acidic residues. The 95-residue stretch at 436 to 530 (ENDEDEDEDV…ECQDALNILP (95 aa)) folds into the Olduvai 2 domain. Basic and acidic residues predominate over residues 461-472 (EMQKAEESKVPE). Residues 610-661 (KSMLRNELQFKEEKLAEQLKQAEELRQYKVLVHSQERELTQLREKLREGRDA) adopt a coiled-coil conformation. 9 Olduvai domains span residues 707-799 (ENDN…HIIP), 800-871 (ENES…VDIG), 872-963 (RHRW…PSCP), 966-1021 (SREL…LDVD), 1022-1114 (RIKK…RSKK), 1115-1207 (KRRR…PSCP), 1210-1265 (SREL…LDVD), 1266-1358 (RIKK…RSKK), and 1359-1457 (KRRR…IFPQ). Disordered regions lie at residues 721 to 746 (AEKV…EDSL) and 791 to 838 (WEDA…GYST). 2 stretches are compositionally biased toward acidic residues: residues 801-810 (NESDDEEEEE) and 821-833 (ESEE…ESWD). Residues 1100–1139 (KKGKGKKRRGRRSKKKRRRGRKEGEEDQNPPCPRLSRELL) are disordered. Residues 1102-1120 (GKGKKRRGRRSKKKRRRGR) show a composition bias toward basic residues. Positions 1344–1378 (KKGKGKKRRGRRSKKKRRRGRKEGEEDQNPPCPRL) are disordered. Residues 1346–1364 (GKGKKRRGRRSKKKRRRGR) show a composition bias toward basic residues.

The protein belongs to the NBPF family. As to expression, widely expressed with highest levels in brain, ovary, mammary gland, skin and adipose tissue. Also expressed in testis. Detected in a number of tumors including osteosarcoma, mammary carcinoma and hepatocellular carcinoma.

The protein resides in the cytoplasm. The chain is NBPF family member NBPF12 from Homo sapiens (Human).